The chain runs to 245 residues: 1-(5-phosphoribosyl)-5-[(5-phosphoribosylamino)methylideneamino] imidazole-4-carboxamide isomerase 1 (245 aa).

Asp-7 acts as the Proton acceptor in catalysis. The Proton donor role is filled by Asp-129.

This sequence belongs to the HisA/HisF family.

It localises to the cytoplasm. It catalyses the reaction 1-(5-phospho-beta-D-ribosyl)-5-[(5-phospho-beta-D-ribosylamino)methylideneamino]imidazole-4-carboxamide = 5-[(5-phospho-1-deoxy-D-ribulos-1-ylimino)methylamino]-1-(5-phospho-beta-D-ribosyl)imidazole-4-carboxamide. Its pathway is amino-acid biosynthesis; L-histidine biosynthesis; L-histidine from 5-phospho-alpha-D-ribose 1-diphosphate: step 4/9. This is 1-(5-phosphoribosyl)-5-[(5-phosphoribosylamino)methylideneamino] imidazole-4-carboxamide isomerase 1 (hisA1) from Photorhabdus laumondii subsp. laumondii (strain DSM 15139 / CIP 105565 / TT01) (Photorhabdus luminescens subsp. laumondii).